Reading from the N-terminus, the 266-residue chain is Hydroxyacylglutathione hydrolase (266 aa).

His53, His55, Asp57, His58, His118, Asp140, and His178 together coordinate Zn(2+).

The protein belongs to the metallo-beta-lactamase superfamily. Glyoxalase II family. As to quaternary structure, monomer. Requires Zn(2+) as cofactor.

The catalysed reaction is an S-(2-hydroxyacyl)glutathione + H2O = a 2-hydroxy carboxylate + glutathione + H(+). It functions in the pathway secondary metabolite metabolism; methylglyoxal degradation; (R)-lactate from methylglyoxal: step 2/2. Its function is as follows. Thiolesterase that catalyzes the hydrolysis of S-D-lactoyl-glutathione to form glutathione and D-lactic acid. This Cupriavidus taiwanensis (strain DSM 17343 / BCRC 17206 / CCUG 44338 / CIP 107171 / LMG 19424 / R1) (Ralstonia taiwanensis (strain LMG 19424)) protein is Hydroxyacylglutathione hydrolase.